The chain runs to 357 residues: Dihydroorotate dehydrogenase (quinone) (357 aa).

Residues 66-70 and threonine 90 contribute to the FMN site; that span reads AGFDK. Lysine 70 provides a ligand contact to substrate. A substrate-binding site is contributed by 115 to 119; it reads NRMGF. The FMN site is built by asparagine 143 and asparagine 176. Substrate is bound at residue asparagine 176. The active-site Nucleophile is the serine 179. Residue asparagine 181 coordinates substrate. FMN is bound by residues lysine 212 and threonine 240. 241-242 is a binding site for substrate; it reads NT. Residues glycine 264, glycine 293, and 314 to 315 each bind FMN; that span reads YT.

It belongs to the dihydroorotate dehydrogenase family. Type 2 subfamily. In terms of assembly, monomer. FMN serves as cofactor.

Its subcellular location is the cell membrane. The catalysed reaction is (S)-dihydroorotate + a quinone = orotate + a quinol. It functions in the pathway pyrimidine metabolism; UMP biosynthesis via de novo pathway; orotate from (S)-dihydroorotate (quinone route): step 1/1. In terms of biological role, catalyzes the conversion of dihydroorotate to orotate with quinone as electron acceptor. This is Dihydroorotate dehydrogenase (quinone) from Mycobacterium bovis (strain BCG / Pasteur 1173P2).